The chain runs to 520 residues: Cytochrome P450 734A1 (520 aa).

A helical membrane pass occupies residues Val13–Trp33. Cys463 serves as a coordination point for heme.

This sequence belongs to the cytochrome P450 family. Heme is required as a cofactor.

The protein localises to the membrane. Cytochrome P450 involved in brassinosteroids (BRs) inactivation and regulation of BRs homeostasis. Inactivates the BRs castasterone (CS) and brassinolide (BL) through carbon 26 hydroxylation. Acts in association with CYP72C1 to inactivate BRs and modulate photomorphogenesis. In Arabidopsis thaliana (Mouse-ear cress), this protein is Cytochrome P450 734A1 (CYP734A1).